Consider the following 150-residue polypeptide: MQIFVDADACPAVIKDMLFRVARRTGICVTLVANQFLRTPPSPHIKALQVPAGFDEADARIVELAQPGDLVVTADIPLAAALLDKGAHPLDPRGNWFSRENIDERLSTRAMMEQLRSAGIDTGGPAPFSARDANAFASQLDRFVARHGKP.

Belongs to the UPF0178 family.

The chain is UPF0178 protein Bcep1808_1605 from Burkholderia vietnamiensis (strain G4 / LMG 22486) (Burkholderia cepacia (strain R1808)).